We begin with the raw amino-acid sequence, 697 residues long: Ribosomal RNA large subunit methyltransferase K/L (697 aa).

Residues 43–154 (ILYNSLMWSR…QNLVHIMLDL (112 aa)) enclose the THUMP domain.

Belongs to the methyltransferase superfamily. RlmKL family.

The protein resides in the cytoplasm. It catalyses the reaction guanosine(2445) in 23S rRNA + S-adenosyl-L-methionine = N(2)-methylguanosine(2445) in 23S rRNA + S-adenosyl-L-homocysteine + H(+). It carries out the reaction guanosine(2069) in 23S rRNA + S-adenosyl-L-methionine = N(2)-methylguanosine(2069) in 23S rRNA + S-adenosyl-L-homocysteine + H(+). Functionally, specifically methylates the guanine in position 2445 (m2G2445) and the guanine in position 2069 (m7G2069) of 23S rRNA. The chain is Ribosomal RNA large subunit methyltransferase K/L from Buchnera aphidicola subsp. Schizaphis graminum (strain Sg).